Here is a 786-residue protein sequence, read N- to C-terminus: Cadherin-9 (786 aa).

Positions 1 to 21 are cleaved as a signal peptide; sequence MRTYSCLQLVIWTCIFHMVDN. N-linked (GlcNAc...) asparagine glycosylation occurs at Asn-21. Positions 22 to 52 are excised as a propeptide; sequence STLQGKDSSHFLRRIVNLKKDEGKMLHRAKR. The Extracellular portion of the chain corresponds to 22–614; the sequence is STLQGKDSSH…MLAAGLSTGA (593 aa). Cadherin domains follow at residues 54-158, 159-267, 268-382, 383-487, and 487-604; these read WMWN…EPKF, TKDL…PPRF, PQST…PPVF, SKLS…APEF, and FATY…AEAL. A glycan (N-linked (GlcNAc...) asparagine) is linked at Asn-254. N-linked (GlcNAc...) asparagine glycans are attached at residues Asn-454 and Asn-535. A helical transmembrane segment spans residues 615-635; that stretch reads LIAILLCVVILLTLIVLFAAL. Residues 636-786 lie on the Cytoplasmic side of the membrane; the sequence is KRQRKKEPLI…AEMYGGNDSD (151 aa). Ser-785 bears the Phosphoserine mark.

It is found in the cell membrane. Functionally, cadherins are calcium-dependent cell adhesion proteins. They preferentially interact with themselves in a homophilic manner in connecting cells; cadherins may thus contribute to the sorting of heterogeneous cell types. This Mus musculus (Mouse) protein is Cadherin-9 (Cdh9).